Here is a 630-residue protein sequence, read N- to C-terminus: Plastin-3 (630 aa).

EF-hand domains follow at residues 12–47 and 52–87; these read DELDELKEAFAKVDLNSNGFICDYELHELFKEANMP and KVREIIQKLMLDGDRNKDGKISFNEFVYIFQEVKSS. Residues aspartate 25, asparagine 27, asparagine 29, glutamate 36, aspartate 65, asparagine 67, aspartate 69, lysine 71, and glutamate 76 each coordinate Ca(2+). Actin-binding stretches follow at residues 109–382 and 383–627; these read TSEL…ALTK and PENQ…GRGM. Calponin-homology (CH) domains follow at residues 123–239 and 267–378; these read EEEK…KIGL and LSPE…NKYP. Serine 268, serine 293, serine 326, and serine 339 each carry phosphoserine. Position 391 is a phosphothreonine (threonine 391). Calponin-homology (CH) domains follow at residues 397 to 506 and 518 to 627; these read TREE…RRYT and KATD…GRGM.

Monomer.

The protein resides in the cytoplasm. In terms of biological role, actin-bundling protein. The polypeptide is Plastin-3 (Pls3) (Rattus norvegicus (Rat)).